Here is a 301-residue protein sequence, read N- to C-terminus: Homoserine O-acetyltransferase (301 aa).

The active-site Acyl-thioester intermediate is Cys142. Substrate contacts are provided by Lys163 and Ser192. His235 acts as the Proton acceptor in catalysis. The active site involves Glu237. Arg249 is a substrate binding site.

The protein belongs to the MetA family.

The protein resides in the cytoplasm. It catalyses the reaction L-homoserine + acetyl-CoA = O-acetyl-L-homoserine + CoA. It functions in the pathway amino-acid biosynthesis; L-methionine biosynthesis via de novo pathway; O-acetyl-L-homoserine from L-homoserine: step 1/1. Transfers an acetyl group from acetyl-CoA to L-homoserine, forming acetyl-L-homoserine. In Bacillus cereus (strain AH187), this protein is Homoserine O-acetyltransferase.